Consider the following 127-residue polypeptide: uncharacterized protein (127 aa).

The span at 1–13 shows a compositional bias: polar residues; sequence MEAGNRSGTPQHR. The segment at 1–26 is disordered; it reads MEAGNRSGTPQHRQLSEIRQDLSSSP.

This is an uncharacterized protein from Saccharomyces cerevisiae (strain ATCC 204508 / S288c) (Baker's yeast).